The primary structure comprises 339 residues: DNA-directed RNA polymerase subunit alpha (339 aa).

The interval 1–233 is alpha N-terminal domain (alpha-NTD); the sequence is MVREEVAGST…DLFLPFLHAE (233 aa). Positions 264–339 are alpha C-terminal domain (alpha-CTD); the sequence is KKGIPLNSIF…IDLLKNKLSF (76 aa).

This sequence belongs to the RNA polymerase alpha chain family. As to quaternary structure, in plastids the minimal PEP RNA polymerase catalytic core is composed of four subunits: alpha, beta, beta', and beta''. When a (nuclear-encoded) sigma factor is associated with the core the holoenzyme is formed, which can initiate transcription.

Its subcellular location is the plastid. The protein resides in the chloroplast. The enzyme catalyses RNA(n) + a ribonucleoside 5'-triphosphate = RNA(n+1) + diphosphate. Its function is as follows. DNA-dependent RNA polymerase catalyzes the transcription of DNA into RNA using the four ribonucleoside triphosphates as substrates. The chain is DNA-directed RNA polymerase subunit alpha from Aegilops tauschii (Tausch's goatgrass).